The following is a 603-amino-acid chain: uncharacterized protein (603 aa).

The PE domain maps to 1–93 (MSFVIAAPET…AGAYASAEAA (93 aa)). Positions 309 to 333 (GIFTGNGGTGGTGGTGTGNQLVGGE) are disordered.

It belongs to the mycobacterial PE family. PGRS subfamily.

This is an uncharacterized protein from Mycobacterium tuberculosis (strain CDC 1551 / Oshkosh).